The chain runs to 901 residues: HTH-type transcriptional regulator MalT (901 aa).

39–46 (SPAGYGKT) serves as a coordination point for ATP. Residues 829 to 894 (ELIRTSPLTQ…AAVQHAQKLL (66 aa)) form the HTH luxR-type domain. Positions 853–872 (NEQIAGELEVAATTIKTHIR) form a DNA-binding region, H-T-H motif.

It belongs to the MalT family. As to quaternary structure, monomer in solution. Oligomerizes to an active state in the presence of the positive effectors ATP and maltotriose.

Its activity is regulated as follows. Activated by ATP and maltotriose, which are both required for DNA binding. Its function is as follows. Positively regulates the transcription of the maltose regulon whose gene products are responsible for uptake and catabolism of malto-oligosaccharides. Specifically binds to the promoter region of its target genes, recognizing a short DNA motif called the MalT box. The sequence is that of HTH-type transcriptional regulator MalT from Escherichia coli O139:H28 (strain E24377A / ETEC).